Here is an 82-residue protein sequence, read N- to C-terminus: RNA-binding protein Hfq (82 aa).

A Sm domain is found at 11 to 71; that stretch reads DTFLNHVRKT…ISTIMPGAPI (61 aa).

It belongs to the Hfq family. In terms of assembly, homohexamer.

RNA chaperone that binds small regulatory RNA (sRNAs) and mRNAs to facilitate mRNA translational regulation in response to envelope stress, environmental stress and changes in metabolite concentrations. Also binds with high specificity to tRNAs. In Rhodopseudomonas palustris (strain TIE-1), this protein is RNA-binding protein Hfq.